Reading from the N-terminus, the 400-residue chain is Elongation factor Tu (400 aa).

The tr-type G domain occupies 10–210 (KPHCNVGTIG…VDTYIPIPPR (201 aa)). The G1 stretch occupies residues 19–26 (GHVDHGKT). 19–26 (GHVDHGKT) provides a ligand contact to GTP. Mg(2+) is bound at residue T26. The tract at residues 60–64 (GLTIA) is G2. The G3 stretch occupies residues 81 to 84 (DCPG). Residues 81-85 (DCPGH) and 136-139 (NKCD) each bind GTP. The interval 136–139 (NKCD) is G4. The interval 174-176 (SAI) is G5.

This sequence belongs to the TRAFAC class translation factor GTPase superfamily. Classic translation factor GTPase family. EF-Tu/EF-1A subfamily. Monomer.

The protein localises to the cytoplasm. The catalysed reaction is GTP + H2O = GDP + phosphate + H(+). Functionally, GTP hydrolase that promotes the GTP-dependent binding of aminoacyl-tRNA to the A-site of ribosomes during protein biosynthesis. In Dehalococcoides mccartyi (strain CBDB1), this protein is Elongation factor Tu.